A 429-amino-acid polypeptide reads, in one-letter code: Serine hydroxymethyltransferase (429 aa).

Residues L125 and 129–131 contribute to the (6S)-5,6,7,8-tetrahydrofolate site; that span reads GHL. K234 bears the N6-(pyridoxal phosphate)lysine mark.

Belongs to the SHMT family. Homodimer. Pyridoxal 5'-phosphate serves as cofactor.

Its subcellular location is the cytoplasm. It carries out the reaction (6R)-5,10-methylene-5,6,7,8-tetrahydrofolate + glycine + H2O = (6S)-5,6,7,8-tetrahydrofolate + L-serine. It participates in one-carbon metabolism; tetrahydrofolate interconversion. The protein operates within amino-acid biosynthesis; glycine biosynthesis; glycine from L-serine: step 1/1. In terms of biological role, catalyzes the reversible interconversion of serine and glycine with tetrahydrofolate (THF) serving as the one-carbon carrier. This reaction serves as the major source of one-carbon groups required for the biosynthesis of purines, thymidylate, methionine, and other important biomolecules. Also exhibits THF-independent aldolase activity toward beta-hydroxyamino acids, producing glycine and aldehydes, via a retro-aldol mechanism. This Allorhizobium ampelinum (strain ATCC BAA-846 / DSM 112012 / S4) (Agrobacterium vitis (strain S4)) protein is Serine hydroxymethyltransferase.